A 99-amino-acid polypeptide reads, in one-letter code: Signal recognition particle 19 kDa protein (99 aa).

It belongs to the SRP19 family. In terms of assembly, part of the signal recognition particle protein translocation system, which is composed of SRP and FtsY. Archaeal SRP consists of a 7S RNA molecule of 300 nucleotides and two protein subunits: SRP54 and SRP19.

It is found in the cytoplasm. Involved in targeting and insertion of nascent membrane proteins into the cytoplasmic membrane. Binds directly to 7S RNA and mediates binding of the 54 kDa subunit of the SRP. This chain is Signal recognition particle 19 kDa protein, found in Pyrococcus horikoshii (strain ATCC 700860 / DSM 12428 / JCM 9974 / NBRC 100139 / OT-3).